The following is a 253-amino-acid chain: Phosphoadenosine 5'-phosphosulfate reductase (253 aa).

C239 serves as the catalytic Nucleophile; cysteine thiosulfonate intermediate.

Belongs to the PAPS reductase family. CysH subfamily.

The protein localises to the cytoplasm. It catalyses the reaction [thioredoxin]-disulfide + sulfite + adenosine 3',5'-bisphosphate + 2 H(+) = [thioredoxin]-dithiol + 3'-phosphoadenylyl sulfate. Its pathway is sulfur metabolism; hydrogen sulfide biosynthesis; sulfite from sulfate: step 3/3. Its function is as follows. Catalyzes the formation of sulfite from phosphoadenosine 5'-phosphosulfate (PAPS) using thioredoxin as an electron donor. In Photobacterium profundum (strain SS9), this protein is Phosphoadenosine 5'-phosphosulfate reductase.